We begin with the raw amino-acid sequence, 378 residues long: Chaperone protein DnaJ (378 aa).

One can recognise a J domain in the interval 5 to 69; that stretch reads DYYEVLGVSK…NKRANYDQFG (65 aa). A CR-type zinc finger spans residues 135 to 217; the sequence is GSEKEISIRK…CHGKGTENKN (83 aa). Zn(2+) contacts are provided by cysteine 148, cysteine 151, cysteine 165, cysteine 168, cysteine 191, cysteine 194, cysteine 205, and cysteine 208. 4 CXXCXGXG motif repeats span residues 148–155, 165–172, 191–198, and 205–212; these read CHTCDGEG, CHYCNGSG, CPVCSGSG, and CPTCHGKG.

It belongs to the DnaJ family. In terms of assembly, homodimer. Zn(2+) is required as a cofactor.

It is found in the cytoplasm. Participates actively in the response to hyperosmotic and heat shock by preventing the aggregation of stress-denatured proteins and by disaggregating proteins, also in an autonomous, DnaK-independent fashion. Unfolded proteins bind initially to DnaJ; upon interaction with the DnaJ-bound protein, DnaK hydrolyzes its bound ATP, resulting in the formation of a stable complex. GrpE releases ADP from DnaK; ATP binding to DnaK triggers the release of the substrate protein, thus completing the reaction cycle. Several rounds of ATP-dependent interactions between DnaJ, DnaK and GrpE are required for fully efficient folding. Also involved, together with DnaK and GrpE, in the DNA replication of plasmids through activation of initiation proteins. In Staphylococcus saprophyticus subsp. saprophyticus (strain ATCC 15305 / DSM 20229 / NCIMB 8711 / NCTC 7292 / S-41), this protein is Chaperone protein DnaJ.